A 571-amino-acid chain; its full sequence is Proline--tRNA ligase (571 aa).

The protein belongs to the class-II aminoacyl-tRNA synthetase family. ProS type 1 subfamily. Homodimer.

It localises to the cytoplasm. It carries out the reaction tRNA(Pro) + L-proline + ATP = L-prolyl-tRNA(Pro) + AMP + diphosphate. In terms of biological role, catalyzes the attachment of proline to tRNA(Pro) in a two-step reaction: proline is first activated by ATP to form Pro-AMP and then transferred to the acceptor end of tRNA(Pro). As ProRS can inadvertently accommodate and process non-cognate amino acids such as alanine and cysteine, to avoid such errors it has two additional distinct editing activities against alanine. One activity is designated as 'pretransfer' editing and involves the tRNA(Pro)-independent hydrolysis of activated Ala-AMP. The other activity is designated 'posttransfer' editing and involves deacylation of mischarged Ala-tRNA(Pro). The misacylated Cys-tRNA(Pro) is not edited by ProRS. This chain is Proline--tRNA ligase, found in Pseudomonas aeruginosa (strain UCBPP-PA14).